Reading from the N-terminus, the 113-residue chain is Urease subunit beta (113 aa).

Belongs to the urease beta subunit family. As to quaternary structure, heterotrimer of UreA (gamma), UreB (beta) and UreC (alpha) subunits. Three heterotrimers associate to form the active enzyme.

The protein resides in the cytoplasm. It catalyses the reaction urea + 2 H2O + H(+) = hydrogencarbonate + 2 NH4(+). The protein operates within nitrogen metabolism; urea degradation; CO(2) and NH(3) from urea (urease route): step 1/1. This Cyanothece sp. (strain PCC 7425 / ATCC 29141) protein is Urease subunit beta.